Reading from the N-terminus, the 273-residue chain is Putative deoxyribonuclease TATDN1 homolog (273 aa).

A divalent metal cation is bound by residues glutamate 91, histidine 125, histidine 147, and aspartate 195.

This sequence belongs to the metallo-dependent hydrolases superfamily. TatD-type hydrolase family. A divalent metal cation serves as cofactor.

The protein localises to the nucleus. Putative deoxyribonuclease. The polypeptide is Putative deoxyribonuclease TATDN1 homolog (Encephalitozoon cuniculi (strain GB-M1) (Microsporidian parasite)).